A 338-amino-acid polypeptide reads, in one-letter code: Protein FosB (338 aa).

2 disordered regions span residues 1–54 (MFQA…PGSF) and 80–179 (AQSQ…RREL). The segment covering 13 to 31 (SRCSSSPSAESQYLSSVDS) has biased composition (polar residues). Phosphoserine is present on Ser-27. Residues 123–137 (PSTSTSTSGPVSARP) are compositionally biased toward low complexity. The 64-residue stretch at 155–218 (EEKRRVRRER…ERLEFVLVAH (64 aa)) folds into the bZIP domain. A basic motif region spans residues 157-182 (KRRVRRERNKLAAAKCRNRRRELTDR). Residues 183–211 (LQAETDQLEEEKAELESEIAELQKEKERL) are leucine-zipper. Disordered stretches follow at residues 222–276 (CKIP…PPNL) and 315–338 (AGSQ…LLAL). Pro residues predominate over residues 256 to 265 (LPPPPPPPLP). Over residues 266 to 276 (FQSSRDAPPNL) the composition is skewed to polar residues.

This sequence belongs to the bZIP family. Fos subfamily. In terms of assembly, heterodimer; binds to DNA as heterodimer. Component of an AP-1 transcription factor complex; composed of FOS-JUN heterodimers. As part of the AP-1 transcription factor complex, forms heterodimers with JUN, JUNB or JUND, thereby binding to the AP-1 consensus sequence and stimulating transcription. Post-translationally, phosphorylated; phosphorylation is induced by chronic electroconvulsive seizure (ECS) treatment. As to expression, expressed in brain. Expressed in pyramidal cells in CA1 and CA3, in the dentate gyrus and the nucleus accumbens (at protein level).

The protein localises to the nucleus. Heterodimerizes with proteins of the JUN family to form an AP-1 transcription factor complex, thereby enhancing their DNA binding activity to an AP-1 consensus sequence 5'-TGA[GC]TCA-3' and enhancing their transcriptional activity. Exhibits transactivation activity in vitro. As part of the AP-1 complex, facilitates enhancer selection together with cell-type-specific transcription factors by collaboratively binding to nucleosomal enhancers and recruiting the SWI/SNF (BAF) chromatin remodeling complex to establish accessible chromatin. Together with JUN, plays a role in activation-induced cell death of T cells by binding to the AP-1 promoter site of FASLG/CD95L, and inducing its transcription in response to activation of the TCR/CD3 signaling pathway. Involved in the display of nurturing behavior towards newborns. May play a role in neurogenesis in the hippocampus and in learning and memory-related tasks by regulating the expression of various genes involved in neurogenesis, depression and epilepsy. Implicated in behavioral responses related to morphine reward and spatial memory. This is Protein FosB from Rattus norvegicus (Rat).